The sequence spans 677 residues: L-type lectin-domain containing receptor kinase IV.2 (677 aa).

A signal peptide spans 1-22 (MFVKLKLIFFFFLLCQIMISSS). Topologically, residues 23–291 (QNLNFTYNGF…EPRRISEFYK (269 aa)) are extracellular. Residues 24-262 (NLNFTYNGFH…EHFLVGWSFR (239 aa)) are legume-lectin like. 8 N-linked (GlcNAc...) asparagine glycosylation sites follow: Asn26, Asn57, Asn81, Asn128, Asn134, Asn171, Asn186, and Asn203. A helical transmembrane segment spans residues 292 to 312 (IGMPLISLSLIFSIIFLAFYI). Residues 313-677 (VRRKKKYEEE…IADSLLSGGR (365 aa)) lie on the Cytoplasmic side of the membrane. The Protein kinase domain occupies 347–625 (FKEKDLLGSG…LQYLRGDMAL (279 aa)). ATP is bound by residues 353–361 (LGSGGFGRV) and Lys376. The active-site Proton acceptor is the Asp472.

It in the C-terminal section; belongs to the protein kinase superfamily. Ser/Thr protein kinase family. The protein in the N-terminal section; belongs to the leguminous lectin family.

Its subcellular location is the cell membrane. The enzyme catalyses L-seryl-[protein] + ATP = O-phospho-L-seryl-[protein] + ADP + H(+). It catalyses the reaction L-threonyl-[protein] + ATP = O-phospho-L-threonyl-[protein] + ADP + H(+). Functionally, required during pollen development. Its function is as follows. Involved in resistance response to the pathogenic bacteria Pseudomonas syringae. The polypeptide is L-type lectin-domain containing receptor kinase IV.2 (Arabidopsis thaliana (Mouse-ear cress)).